The primary structure comprises 38 residues: MKVRASVKKRSPECKIVRRKGRLYVINKKNPRFKQRQG.

It belongs to the bacterial ribosomal protein bL36 family.

The chain is Large ribosomal subunit protein bL36 from Flavobacterium psychrophilum (strain ATCC 49511 / DSM 21280 / CIP 103535 / JIP02/86).